The following is an 88-amino-acid chain: MGSIATNPEGITNPPIDELLEKTTSKYALVIFAAKRARQVNAYYSQLGEGLLEYVGPLVETTPQEKPLSIAMREINGGLLTAEPTDQP.

This sequence belongs to the RNA polymerase subunit omega family. As to quaternary structure, the RNAP catalytic core consists of 2 alpha, 1 beta, 1 beta' and 1 omega subunit. When a sigma factor is associated with the core the holoenzyme is formed, which can initiate transcription.

It carries out the reaction RNA(n) + a ribonucleoside 5'-triphosphate = RNA(n+1) + diphosphate. Promotes RNA polymerase assembly. Latches the N- and C-terminal regions of the beta' subunit thereby facilitating its interaction with the beta and alpha subunits. The protein is DNA-directed RNA polymerase subunit omega of Salinispora tropica (strain ATCC BAA-916 / DSM 44818 / JCM 13857 / NBRC 105044 / CNB-440).